Reading from the N-terminus, the 484-residue chain is Malonate-semialdehyde dehydrogenase 1 (484 aa).

Residues Phe153, Lys177, Glu180, Arg181, Ser230, and Thr252 each coordinate NAD(+). Cys285 acts as the Nucleophile in catalysis. Glu385 lines the NAD(+) pocket.

The protein belongs to the aldehyde dehydrogenase family. IolA subfamily. In terms of assembly, homotetramer.

The catalysed reaction is 3-oxopropanoate + NAD(+) + CoA + H2O = hydrogencarbonate + acetyl-CoA + NADH + H(+). It catalyses the reaction 2-methyl-3-oxopropanoate + NAD(+) + CoA + H2O = propanoyl-CoA + hydrogencarbonate + NADH + H(+). It participates in polyol metabolism; myo-inositol degradation into acetyl-CoA; acetyl-CoA from myo-inositol: step 7/7. Functionally, catalyzes the oxidation of malonate semialdehyde (MSA) and methylmalonate semialdehyde (MMSA) into acetyl-CoA and propanoyl-CoA, respectively. Is involved in a myo-inositol catabolic pathway. Bicarbonate, and not CO2, is the end-product of the enzymatic reaction. This chain is Malonate-semialdehyde dehydrogenase 1, found in Geobacillus thermodenitrificans (strain NG80-2).